The primary structure comprises 37 residues: Antifungal protein 4 (37 aa).

The protein resides in the secreted. In terms of biological role, possesses antifungal activity against P.infestans but not F.graminearum. This chain is Antifungal protein 4, found in Malva parviflora (Little mallow).